The sequence spans 222 residues: uncharacterized protein (222 aa).

The chain crosses the membrane as a helical span at residues 7–26 (ICLVSLICISGIYFGYQYYQ). The region spanning 139-222 (CRSNAGYKVQ…AYNKQSCVLK (84 aa)) is the SPOR domain.

The protein localises to the membrane. This is an uncharacterized protein from Rickettsia prowazekii (strain Madrid E).